A 164-amino-acid polypeptide reads, in one-letter code: Phosphohistidine phosphatase SixA homolog (164 aa).

The protein belongs to the SixA phosphatase family.

The protein is Phosphohistidine phosphatase SixA homolog (sixA-A) of Haemophilus influenzae (strain ATCC 51907 / DSM 11121 / KW20 / Rd).